The primary structure comprises 211 residues: Small ribosomal subunit protein uS3 (211 aa).

The KH type-2 domain occupies 16 to 85 (IDEYFKTKLV…NPQIEVKQVE (70 aa)).

This sequence belongs to the universal ribosomal protein uS3 family. Part of the 30S ribosomal subunit.

Binds the lower part of the 30S subunit head. The polypeptide is Small ribosomal subunit protein uS3 (Methanococcus maripaludis (strain C5 / ATCC BAA-1333)).